The sequence spans 154 residues: Ribosome maturation factor RimP (154 aa).

It belongs to the RimP family.

The protein localises to the cytoplasm. Its function is as follows. Required for maturation of 30S ribosomal subunits. This chain is Ribosome maturation factor RimP, found in Carboxydothermus hydrogenoformans (strain ATCC BAA-161 / DSM 6008 / Z-2901).